A 363-amino-acid chain; its full sequence is Ribosomal RNA large subunit methyltransferase M (363 aa).

S-adenosyl-L-methionine contacts are provided by residues serine 194, 227–230, aspartate 246, aspartate 266, and aspartate 284; that span reads CPGG. The active-site Proton acceptor is lysine 313.

It belongs to the class I-like SAM-binding methyltransferase superfamily. RNA methyltransferase RlmE family. RlmM subfamily. Monomer.

Its subcellular location is the cytoplasm. It carries out the reaction cytidine(2498) in 23S rRNA + S-adenosyl-L-methionine = 2'-O-methylcytidine(2498) in 23S rRNA + S-adenosyl-L-homocysteine + H(+). Its function is as follows. Catalyzes the 2'-O-methylation at nucleotide C2498 in 23S rRNA. The polypeptide is Ribosomal RNA large subunit methyltransferase M (Mannheimia succiniciproducens (strain KCTC 0769BP / MBEL55E)).